The primary structure comprises 264 residues: Merozoite surface protein 2 (264 aa).

The N-terminal stretch at 1 to 20 (MKVIKTLSIINFFIFVTFNI) is a signal peptide. N-linked (GlcNAc...) asparagine glycosylation is found at N22 and N36. Residues 44-190 (ANEGSNTNSV…PQTAENENPA (147 aa)) form a polymorphic region region. The interval 46–225 (EGSNTNSVGA…DSQKECTDGN (180 aa)) is disordered. Tandem repeats lie at residues 60-91 (ADTI…TPTA) and 92-123 (ADTI…TPTA). Positions 60-123 (ADTIASGSQR…GESQTTTPTA (64 aa)) are 2 X 32 AA perfects repeats. Residues 70-81 (STNSASTSTTNN) show a composition bias toward low complexity. The span at 82–101 (GESQTTTPTAADTIASGSQR) shows a compositional bias: polar residues. Positions 102–145 (STNSASTSTTNNGESQTTTPTAADTPTTTESNSPSPPITTTESS) are enriched in low complexity. An N-linked (GlcNAc...) asparagine glycan is attached at N152. A compositionally biased stretch (basic and acidic residues) spans 154-166 (TDGKGEESEKQNE). N-linked (GlcNAc...) asparagine glycosylation is found at N168 and N213. The cysteines at positions 221 and 229 are disulfide-linked. N237 and N238 each carry an N-linked (GlcNAc...) asparagine glycan. N238 carries the GPI-anchor amidated asparagine lipid modification. The propeptide at 239 to 264 (SSNIASINKFVVLISATLVLSFAIFI) is removed in mature form.

It is found in the cell membrane. May play a role in the merozoite attachment to the erythrocyte. The protein is Merozoite surface protein 2 of Plasmodium falciparum (isolate fid3 / India).